We begin with the raw amino-acid sequence, 219 residues long: Uracil-DNA glycosylase (219 aa).

Asp-61 serves as the catalytic Proton acceptor.

The protein belongs to the uracil-DNA glycosylase (UDG) superfamily. UNG family.

It is found in the cytoplasm. The enzyme catalyses Hydrolyzes single-stranded DNA or mismatched double-stranded DNA and polynucleotides, releasing free uracil.. Its function is as follows. Excises uracil residues from the DNA which can arise as a result of misincorporation of dUMP residues by DNA polymerase or due to deamination of cytosine. This Haemophilus influenzae (strain PittEE) protein is Uracil-DNA glycosylase.